Consider the following 153-residue polypeptide: 6,7-dimethyl-8-ribityllumazine synthase 1 (153 aa).

5-amino-6-(D-ribitylamino)uracil-binding positions include phenylalanine 16, 50-52 (AYE), and 74-76 (CVI). 79 to 80 (ET) is a (2S)-2-hydroxy-3-oxobutyl phosphate binding site. The Proton donor role is filled by histidine 82. Phenylalanine 107 is a 5-amino-6-(D-ribitylamino)uracil binding site. A (2S)-2-hydroxy-3-oxobutyl phosphate-binding site is contributed by arginine 121.

The protein belongs to the DMRL synthase family.

The catalysed reaction is (2S)-2-hydroxy-3-oxobutyl phosphate + 5-amino-6-(D-ribitylamino)uracil = 6,7-dimethyl-8-(1-D-ribityl)lumazine + phosphate + 2 H2O + H(+). It participates in cofactor biosynthesis; riboflavin biosynthesis; riboflavin from 2-hydroxy-3-oxobutyl phosphate and 5-amino-6-(D-ribitylamino)uracil: step 1/2. In terms of biological role, catalyzes the formation of 6,7-dimethyl-8-ribityllumazine by condensation of 5-amino-6-(D-ribitylamino)uracil with 3,4-dihydroxy-2-butanone 4-phosphate. This is the penultimate step in the biosynthesis of riboflavin. The protein is 6,7-dimethyl-8-ribityllumazine synthase 1 of Caulobacter vibrioides (strain ATCC 19089 / CIP 103742 / CB 15) (Caulobacter crescentus).